Consider the following 963-residue polypeptide: Non-ribosomal peptide synthetase CmlP (963 aa).

The 77-residue stretch at 492–568 (GEDAAELRRV…AAFLRHLRGE (77 aa)) folds into the Carrier domain. Ser-526 carries the O-(pantetheine 4'-phosphoryl)serine modification. A disordered region spans residues 928–963 (GRLLGTPPDTPAGDRPERTGTTAEAQNGAAHAPTPR).

Belongs to the ATP-dependent AMP-binding enzyme family. Pantetheine 4'-phosphate is required as a cofactor.

The enzyme catalyses 4-amino-L-phenylalanine + holo-[peptidyl-carrier protein] + ATP = 4-amino-L-phenylalanyl-[peptidyl-carrier protein] + AMP + diphosphate. It participates in antibiotic biosynthesis. Its function is as follows. Involved in chloramphenicol biosynthesis. Activates 4-amino-L-phenylalanine by adenylation and loads it onto its peptidyl carrier domain, via a thioester linkage to the phosphopanthetheine moiety. Can also adenylate tyrosine and phenylalanine at low rates, but not L-p-nitrophenylalanine or threo-phenylserine. The polypeptide is Non-ribosomal peptide synthetase CmlP (Streptomyces venezuelae (strain ATCC 10712 / CBS 650.69 / DSM 40230 / JCM 4526 / NBRC 13096 / PD 04745)).